A 470-amino-acid chain; its full sequence is Proline--tRNA ligase (470 aa).

Belongs to the class-II aminoacyl-tRNA synthetase family. ProS type 3 subfamily. Homodimer.

The protein localises to the cytoplasm. It carries out the reaction tRNA(Pro) + L-proline + ATP = L-prolyl-tRNA(Pro) + AMP + diphosphate. Its function is as follows. Catalyzes the attachment of proline to tRNA(Pro) in a two-step reaction: proline is first activated by ATP to form Pro-AMP and then transferred to the acceptor end of tRNA(Pro). In Malacoplasma penetrans (strain HF-2) (Mycoplasma penetrans), this protein is Proline--tRNA ligase.